The primary structure comprises 219 residues: tRNA (guanine-N(7)-)-methyltransferase (219 aa).

The S-adenosyl-L-methionine site is built by D47, E72, N99, and D125. The active site involves D125. The substrate site is built by K129 and D161.

Belongs to the class I-like SAM-binding methyltransferase superfamily. TrmB family.

The enzyme catalyses guanosine(46) in tRNA + S-adenosyl-L-methionine = N(7)-methylguanosine(46) in tRNA + S-adenosyl-L-homocysteine. Its pathway is tRNA modification; N(7)-methylguanine-tRNA biosynthesis. Catalyzes the formation of N(7)-methylguanine at position 46 (m7G46) in tRNA. This is tRNA (guanine-N(7)-)-methyltransferase from Nostoc sp. (strain PCC 7120 / SAG 25.82 / UTEX 2576).